A 753-amino-acid polypeptide reads, in one-letter code: Rho guanine nucleotide exchange factor gef1 (753 aa).

Disordered stretches follow at residues 52 to 150 (SNSY…DRNR), 175 to 194 (TLRK…RVSG), and 200 to 245 (AQNS…ASLL). Polar residues-rich tracts occupy residues 94-105 (DPQTPNTPPVSS), 114-141 (GSFN…TLTP), 181-191 (TNTSSNGTSRR), and 200-220 (AQNS…GSST). A compositionally biased stretch (low complexity) spans 230–245 (TLASMPSSHSSTASLL). The DH domain maps to 311–507 (KRANLIKELV…QELISGINQK (197 aa)).

In terms of assembly, interacts with cdc42.

Its subcellular location is the cytoplasm. Has a role in the control of cell polarity and cytokinesis. Involved in bipolar growth, via modulation of cdc42-shk1-orb6 signaling, and septum formation. Stimulates guanine nucleotide exchange of cdc42. The protein is Rho guanine nucleotide exchange factor gef1 (gef1) of Schizosaccharomyces pombe (strain 972 / ATCC 24843) (Fission yeast).